The chain runs to 255 residues: 5'-nucleotidase SurE (255 aa).

A divalent metal cation is bound by residues Asp8, Asp9, Ser40, and Asn93.

This sequence belongs to the SurE nucleotidase family. It depends on a divalent metal cation as a cofactor.

It is found in the cytoplasm. It carries out the reaction a ribonucleoside 5'-phosphate + H2O = a ribonucleoside + phosphate. Functionally, nucleotidase that shows phosphatase activity on nucleoside 5'-monophosphates. In Azorhizobium caulinodans (strain ATCC 43989 / DSM 5975 / JCM 20966 / LMG 6465 / NBRC 14845 / NCIMB 13405 / ORS 571), this protein is 5'-nucleotidase SurE.